The primary structure comprises 935 residues: ATP-dependent RNA helicase dbp10 (935 aa).

Residues 1 to 51 (MAPRAASPALSENEFDITGALFQNDSESDNERSSAKSKRQPKKKIPSQDLD) form a disordered region. Residues 35–45 (AKSKRQPKKKI) show a composition bias toward basic residues. Positions 89 to 117 (GGFQAMGLSANLLKAIARKGFSVPTPIQR) match the Q motif motif. A Helicase ATP-binding domain is found at 120–292 (IPVIMDDQDV…RAGLQEPTLI (173 aa)). 133–140 (ARTGSGKT) serves as a coordination point for ATP. The DEAD box signature appears at 240-243 (DEAD). The region spanning 360–514 (EMEKAVNTKE…HVNFAEDVVA (155 aa)) is the Helicase C-terminal domain. 2 disordered regions span residues 638–674 (LETK…NEDE) and 857–935 (SGKR…SRKR). 3 stretches are compositionally biased toward basic and acidic residues: residues 662-673 (KTGEGEAGKNED), 866-881 (EQAP…DYEK), and 906-916 (SELRNTDDIRI).

Belongs to the DEAD box helicase family. DDX54/DBP10 subfamily.

The protein resides in the nucleus. It localises to the nucleolus. It catalyses the reaction ATP + H2O = ADP + phosphate + H(+). Its function is as follows. ATP-binding RNA helicase involved in the biogenesis of 60S ribosomal subunits and is required for the normal formation of 25S and 5.8S rRNAs. The chain is ATP-dependent RNA helicase dbp10 (dbp10) from Aspergillus clavatus (strain ATCC 1007 / CBS 513.65 / DSM 816 / NCTC 3887 / NRRL 1 / QM 1276 / 107).